A 254-amino-acid chain; its full sequence is 21S rRNA pseudouridine(2819) synthase (254 aa).

Residue Asp71 is part of the active site.

It belongs to the pseudouridine synthase RluA family.

The protein localises to the mitochondrion. The enzyme catalyses uridine(2819) in 21S rRNA = pseudouridine(2819) in 21S rRNA. Its function is as follows. Pseudouridylate synthase responsible for the pseudouridine-2819 formation in mitochondrial 21S rRNA. May modulate the efficiency or the fidelity of the mitochondrial translation machinery. The protein is 21S rRNA pseudouridine(2819) synthase (PUS5) of Saccharomyces cerevisiae (strain ATCC 204508 / S288c) (Baker's yeast).